A 1224-amino-acid chain; its full sequence is MNQDFEHQLSFHSNNNSNSNHHHSYNNSINSGSSSSGSNNSSNNNSFNDEIEGGEIQEEPYISSSSIRTSELDQKILFLSKDRNLSKRTGSEDPQYGSFFNTLSEPLILSQQSHQQHKKQNRDQHSSSSSSSSSSSSSSSRSKRSNQPPPLVGIAAINQQQQHLQKQKQQLQQQQIQIQLQKQQLQQQIVQHQTELQNKSTPSKTSSASSPPQNTLSAPAPPAPAPTSAPTSAPTSSSVSSLTQPQKPKSVQYSQPAPLEIREEKVDPNIKEEFENTESKISSIIQSMICPISPLRSPFNESIVYTNISSSSSDFDYNNSNSNNSNNNNNNNNSITENNTDKMINNQPSSTNSKKLKTNEIDSKDTSNNNLNGADFKKTTTTTTTTTTSSTSEPIKSPNSSSSTNSSASTTPTVKKEKLILKIPKLVVKSDSGTNKESNSSNSSSTTSTPKSKDLEEKKEKEKSEKEKGEKLEKSEKSDKSEKTEKTEKAEKTEKSEKSEKSEKTDQLEKAEKLEKEEKTEKKKTEKVEKAGKVEKKEKPKDKQTKQEKEKEKEKEKETEKEKEKKDKVSSKKDELQPIEEDKKKIGGKRKSINSSKPEFKSDSIDMDIDEPNPKSSSNYNDSDDDSENEIDKSDKRSQKKSKVESPPKSSKLSNGKDKKSTTTTTTSTSSSSSLPSLSSSSSSLPLPSSSSSSSSSSSSSSSSSSSSSSSSSSSTTSTKIKKEEPPPPPPQQPPPPPPQQPPPPPPPINPFSVSEHDKKIIEKETGKDLGSSRDRDNSSRTTNGRDSDRDRDSREGSRDRDRDRDRDRDRDRDRDRDRGRDRGNGDRGEGDRDRDRSGRSDRDRDRDRDRDRDRDRDRDRGNDRDRDRDRDRDRDRGRDRGSDRDRDRKDSNSNNNSNNNNNNNNNNNNNNNNNNNNKKDNNNNNNNNNNNNNKRDGNKDGSSSELTPKKTKQEEKLIRSQIDQIKEDAKDLKKLAKELQSKNQNECLEMYLQVGLKYLLTTHYMIEVNDPLPNIISFLSEISLFFSNTSRLALHFKDDPKASLCFKCESFCCIKMFCLKKDNLKHTRKEVSSVYSSFLPNSSSSSKSSSSSSSSSNQPANPATAPLTPNPGNPSESPSQASSSSNPTSTTPSATTTTTTTATTTPSTTATTTTTSNNNQPNTSHVNTKIAQYFKDTEDIFRGMDAWEKSILHSNIPGFHFNFFYQPYLEFIDQVKKESDKQS.

Disordered stretches follow at residues 1–67, 111–151, 193–270, 316–416, 430–957, and 1078–1167; these read MNQD…SSSI, QQSH…PPPL, QTEL…DPNI, DYNN…TVKK, SDSG…QEEK, and SFLP…TSHV. Over residues 10-48 the composition is skewed to low complexity; the sequence is SFHSNNNSNSNHHHSYNNSINSGSSSSGSNNSSNNNSFN. A compositionally biased stretch (acidic residues) spans 49–58; sequence DEIEGGEIQE. Low complexity-rich tracts occupy residues 126–140, 193–212, and 228–241; these read SSSSSSSSSSSSSSS, QTELQNKSTPSKTSSASSPP, and SAPTSAPTSSSVSS. Polar residues predominate over residues 242 to 255; sequence LTQPQKPKSVQYSQ. A compositionally biased stretch (basic and acidic residues) spans 260 to 270; that stretch reads EIREEKVDPNI. Positions 316–338 are enriched in low complexity; the sequence is DYNNSNSNNSNNNNNNNNSITEN. The span at 341–353 shows a compositional bias: polar residues; the sequence is DKMINNQPSSTNS. 2 stretches are compositionally biased toward low complexity: residues 379–413 and 430–450; these read TTTTTTTTTTSSTSEPIKSPNSSSSTNSSASTTPT and SDSGTNKESNSSNSSSTTSTP. 2 stretches are compositionally biased toward basic and acidic residues: residues 451 to 585 and 630 to 646; these read KSKD…DKKK and EIDKSDKRSQKKSKVES. Residues 662–719 are compositionally biased toward low complexity; sequence TTTTTTSTSSSSSLPSLSSSSSSLPLPSSSSSSSSSSSSSSSSSSSSSSSSSSSTTST. The span at 727–750 shows a compositional bias: pro residues; sequence PPPPPQQPPPPPPQQPPPPPPPIN. Residues 755–892 show a composition bias toward basic and acidic residues; it reads SEHDKKIIEK…SDRDRDRKDS (138 aa). A compositionally biased stretch (low complexity) spans 893–933; that stretch reads NSNNNSNNNNNNNNNNNNNNNNNNNNKKDNNNNNNNNNNNN. A compositionally biased stretch (basic and acidic residues) spans 948 to 957; it reads TPKKTKQEEK. Residues 950 to 991 are a coiled coil; sequence KKTKQEEKLIRSQIDQIKEDAKDLKKLAKELQSKNQNECLEM. Low complexity-rich tracts occupy residues 1078–1108 and 1114–1165; these read SFLPNSSSSSKSSSSSSSSSNQPANPATAPL and NPSE…PNTS.

This is an uncharacterized protein from Dictyostelium discoideum (Social amoeba).